The primary structure comprises 431 residues: Sulfide dehydrogenase [flavocytochrome c] flavoprotein chain (431 aa).

Residues 1-30 (MTLNRRDFIKTSGAAVAAVGILGFPHLAFG) constitute a signal peptide (tat-type signal). An FAD-binding site is contributed by 70 to 76 (YTCYLSN). Cysteines 191 and 367 form a disulfide.

As to quaternary structure, dimer of one cytochrome and one flavoprotein. Predicted to be exported by the Tat system. The position of the signal peptide cleavage has been experimentally proven.

It is found in the periplasm. The catalysed reaction is hydrogen sulfide + 2 Fe(III)-[cytochrome c] = sulfur + 2 Fe(II)-[cytochrome c] + H(+). This Allochromatium vinosum (strain ATCC 17899 / DSM 180 / NBRC 103801 / NCIMB 10441 / D) (Chromatium vinosum) protein is Sulfide dehydrogenase [flavocytochrome c] flavoprotein chain (fccB).